Reading from the N-terminus, the 356-residue chain is Inactive ubiquitin thioesterase OTULINL (356 aa).

The segment at 1 to 22 (MAATRSPTRARERERSGAPAAG) is disordered. Residues 1-83 (MAATRSPTRA…KWWIGYLQRK (83 aa)) are required for membrane binding. An OTU domain is found at 128 to 356 (KCVRQVRRDN…NDRHYHIPVF (229 aa)).

The protein belongs to the peptidase C65 family. Otulin subfamily. Does not bind ubiquitin or ubiquitin-like proteins.

It localises to the cytoplasm. The protein resides in the endoplasmic reticulum membrane. It is found in the nucleus envelope. In terms of biological role, lacks deubiquitinase activity. In Homo sapiens (Human), this protein is Inactive ubiquitin thioesterase OTULINL.